We begin with the raw amino-acid sequence, 228 residues long: UPF0758 protein SAB1521c (228 aa).

In terms of domain architecture, MPN spans 102 to 224 (KITQPSDVAD…FTSLVEAGYF (123 aa)). Residues H173, H175, and D186 each contribute to the Zn(2+) site. Residues 173-186 (HNHPSGDVTPSQED) carry the JAMM motif motif.

It belongs to the UPF0758 family.

The protein is UPF0758 protein SAB1521c of Staphylococcus aureus (strain bovine RF122 / ET3-1).